Consider the following 1616-residue polypeptide: DNA (cytosine-5)-methyltransferase 1 (1616 aa).

The interaction with DMAP1 stretch occupies residues 1 to 120; the sequence is MPARTAPARV…NQARSEARRV (120 aa). The interaction with DNMT3A stretch occupies residues 1–148; it reads MPARTAPARV…RRSKSDGEAK (148 aa). 2 interaction with the PRC2/EED-EZH2 complex regions span residues 1-336 and 308-606; these read MPAR…TEKK and NPQI…TIRH. The DMAP1-binding domain occupies 16 to 109; that stretch reads PAISLPDDVR…NREVNGRLEN (94 aa). Lys-70 is modified (N6,N6-dimethyllysine). The interval 103-349 is disordered; the sequence is VNGRLENGNQ…AKTVMNSKTH (247 aa). Ser-127 and Ser-133 each carry phosphoserine. At Thr-137 the chain carries Phosphothreonine. Residue Ser-141 is modified to Phosphoserine. Lys-142 carries the post-translational modification N6-methyllysine; by SETD7. At Ser-143 the chain carries Phosphoserine; by PKB/AKT1. Residues 149–217 form an interaction with DNMT3B region; the sequence is PEPSPSPRIT…TSRERVARPL (69 aa). 2 positions are modified to phosphoserine: Ser-152 and Ser-154. Lys-160 carries the N6-acetyllysine modification. An interaction with PCNA region spans residues 163-174; the sequence is RQTTITSHFAKG. Thr-166 bears the Phosphothreonine mark. An N6-acetyllysine mark is found at Lys-173 and Lys-188. Residues 177–205 carry the Nuclear localization signal motif; sequence KRKPQEESERAKSDESIKEEDKDQDEKRR. Composition is skewed to basic and acidic residues over residues 179–214, 221–267, and 281–306; these read KPQE…ERVA, EPER…REAR, and KDEK…EPEK. Lys-259 bears the N6-acetyllysine; alternate mark. A Glycyl lysine isopeptide (Lys-Gly) (interchain with G-Cter in SUMO2); alternate cross-link involves residue Lys-259. The tract at residues 310–502 is homodimerization; the sequence is QISDEKDEDE…PEYAPIFGLM (193 aa). The residue at position 312 (Ser-312) is a Phosphoserine. Positions 321–337 are enriched in basic and acidic residues; it reads EEKRRKTTPKEPTEKKM. A DNA replication foci-targeting sequence region spans residues 331–550; the sequence is EPTEKKMARA…NLNRFTEDSL (220 aa). Residues Cys-353 and Cys-356 each coordinate Zn(2+). Lys-366 is subject to N6-acetyllysine. Ser-394 and Ser-398 each carry phosphoserine. Cys-414 and His-418 together coordinate Zn(2+). Ser-509 and Ser-549 each carry phosphoserine. Residues 646–692 form a CXXC-type zinc finger; it reads NAFKRRRCGVCEVCQQPECGKCKACKDMVKFGGSGRSKQACQERRCP. The interval 651–697 is required for activity; sequence RRCGVCEVCQQPECGKCKACKDMVKFGGSGRSKQACQERRCPNMAMK. Residues Cys-653, Cys-656, Cys-659, Cys-664, Cys-667, Cys-670, Cys-686, and Cys-691 each coordinate Zn(2+). The tract at residues 693 to 754 is autoinhibitory linker; sequence NMAMKEADDD…SYYKKVCIDA (62 aa). Residues 699-709 show a composition bias toward acidic residues; that stretch reads ADDDEEVDDNI. Positions 699-729 are disordered; the sequence is ADDDEEVDDNIPEMPSPKKMHQGKKKKQNKN. Ser-714 is modified (phosphoserine). Residues 716–728 show a composition bias toward basic residues; the sequence is KKMHQGKKKKQNK. Ser-732 is subject to Phosphoserine. Lys-749 is modified (N6-acetyllysine). Residues 755–880 form the BAH 1 domain; that stretch reads ETLEVGDCVS…QDYARFESPP (126 aa). Phosphoserine is present on Ser-878. An N6-acetyllysine mark is found at Lys-891, Lys-957, Lys-961, Lys-975, and Lys-1054. The region spanning 972–1100 is the BAH 2 domain; sequence HYRKYSDYIK…AKSKSFEDPP (129 aa). The tract at residues 1095–1130 is disordered; sequence SFEDPPNHARSPGNKGKGKGKGKGKPKSQACEPSEP. A run of 5 repeats spans residues 1109–1110, 1111–1112, 1113–1114, 1115–1116, and 1117–1118. Positions 1109–1120 are 6 X 2 AA tandem repeats of K-G; it reads KGKGKGKGKGKP. Residues 1110–1120 are compositionally biased toward basic residues; sequence GKGKGKGKGKP. Residues Lys-1111, Lys-1113, and Lys-1115 each carry the N6-acetyllysine modification. Lys-1117 carries the N6-acetyllysine; by EHMT2 modification. N6-acetyllysine is present on residues Lys-1119 and Lys-1121. The stretch at 1119 to 1120 is one 6; approximate repeat; that stretch reads KP. Positions 1121 to 1616 are interaction with the PRC2/EED-EZH2 complex; sequence KSQACEPSEP…KIKEEEAAKD (496 aa). An SAM-dependent MTase C5-type domain is found at 1139-1599; it reads LRTLDVFSGC…LEIKLCMLAK (461 aa). A catalytic region spans residues 1139–1616; the sequence is LRTLDVFSGC…KIKEEEAAKD (478 aa). Residues Ser-1146, 1150–1151, 1168–1169, 1190–1191, and Cys-1191 each bind S-adenosyl-L-methionine; these read GL, EM, and DC. The active site involves Cys-1226. An N6-acetyllysine mark is found at Lys-1349 and Lys-1415. S-adenosyl-L-methionine is bound by residues Asn-1578 and Val-1580. A Glycyl lysine isopeptide (Lys-Gly) (interchain with G-Cter in SUMO2) cross-link involves residue Lys-1609.

This sequence belongs to the class I-like SAM-binding methyltransferase superfamily. C5-methyltransferase family. In terms of assembly, homodimer. Forms a stable complex with E2F1, BB1 and HDAC1. Forms a complex with DMAP1 and HDAC2, with direct interaction. Interacts with the PRC2/EED-EZH2 complex. Probably part of a corepressor complex containing ZNF304, TRIM28, SETDB1 and DNMT1. Interacts with UHRF1; promoting its recruitment to hemimethylated DNA. Interacts with USP7, promoting its deubiquitination. Interacts with PCNA. Interacts with MBD2 and MBD3. Interacts with DNMT3A and DNMT3B. Interacts with UBC9. Interacts with CSNK1D. Interacts with HDAC1. Interacts with BAZ2A/TIP5. Interacts with SIRT7. Interacts with ZNF263; recruited to the SIX3 promoter along with other proteins involved in chromatin modification and transcriptional corepression where it contributes to transcriptional repression. Interacts with L3MBTL3 and DCAF5; the interaction requires DNMT1 methylation at Lys-142 and is necessary to target DNMT1 for ubiquitination by the CRL4-DCAF5 E3 ubiquitin ligase complex and proteasomal degradation. Interacts with PHF20L1; the interaction requires DNMT1 methylation at Lys-142 and protects DNMT1 from ubiquitination and proteasomal degradation. Post-translationally, sumoylated; sumoylation increases activity. Acetylation on multiple lysines, mainly by KAT2B/PCAF, regulates cell cycle G(2)/M transition. Deacetylation of Lys-1349 and Lys-1415 by SIRT1 increases methyltransferase activity. In terms of processing, phosphorylation of Ser-154 by CDKs is important for enzymatic activity and protein stability. Phosphorylation of Ser-143 by AKT1 prevents methylation by SETD7 thereby increasing DNMT1 stability. Post-translationally, methylation at Lys-142 by SETD7 is necessary for the regulation of DNMT1 proteasomal degradation. Ubiquitinated by UHRF1; interaction with USP7 counteracts ubiquitination by UHRF1 by promoting deubiquitination and preventing degradation by the proteasome. As to expression, ubiquitous; highly expressed in fetal tissues, heart, kidney, placenta, peripheral blood mononuclear cells, and expressed at lower levels in spleen, lung, brain, small intestine, colon, liver, and skeletal muscle. Isoform 2 is less expressed than isoform 1.

The protein resides in the nucleus. The catalysed reaction is a 2'-deoxycytidine in DNA + S-adenosyl-L-methionine = a 5-methyl-2'-deoxycytidine in DNA + S-adenosyl-L-homocysteine + H(+). Methylates CpG residues. Preferentially methylates hemimethylated DNA. Associates with DNA replication sites in S phase maintaining the methylation pattern in the newly synthesized strand, that is essential for epigenetic inheritance. Associates with chromatin during G2 and M phases to maintain DNA methylation independently of replication. It is responsible for maintaining methylation patterns established in development. DNA methylation is coordinated with methylation of histones. Mediates transcriptional repression by direct binding to HDAC2. In association with DNMT3B and via the recruitment of CTCFL/BORIS, involved in activation of BAG1 gene expression by modulating dimethylation of promoter histone H3 at H3K4 and H3K9. Probably forms a corepressor complex required for activated KRAS-mediated promoter hypermethylation and transcriptional silencing of tumor suppressor genes (TSGs) or other tumor-related genes in colorectal cancer (CRC) cells. Also required to maintain a transcriptionally repressive state of genes in undifferentiated embryonic stem cells (ESCs). Associates at promoter regions of tumor suppressor genes (TSGs) leading to their gene silencing. Promotes tumor growth. The protein is DNA (cytosine-5)-methyltransferase 1 (DNMT1) of Homo sapiens (Human).